A 55-amino-acid polypeptide reads, in one-letter code: Ferredoxin (55 aa).

2 4Fe-4S ferredoxin-type domains span residues 2 to 27 (FVIN…TQGD) and 28 to 55 (TQFV…PNQE). [4Fe-4S] cluster is bound by residues Cys8, Cys11, Cys14, Cys18, Cys37, Cys40, Cys43, and Cys47.

Requires [4Fe-4S] cluster as cofactor.

Ferredoxins are iron-sulfur proteins that transfer electrons in a wide variety of metabolic reactions. The polypeptide is Ferredoxin (Clostridium butyricum).